A 553-amino-acid polypeptide reads, in one-letter code: MIRFGNPSSSDKRRQRCRSWYWGGLLLLWAVAETRADIHYATVYWLEAEKSFQIKDVLDKNGDAYGYYNDAIQSTGWGILEIKAGYGNQPISNEILMYAAGFLEGYLTASHMSDHFANLFPLMIKNVIIEQKVKDFIQKQDEWTRQQIKNNKDDPFWRNAGYVIAQLDGLYMGNVEWAKRQKRTPLTDFEISFLNAIGDLLDLIPALHSELRKSDFRSMPDVSRIYQWDMGHCSALIKVLPGYENIYFAHSSWFTYAATLRIYKHLDFRITDPQTKTGRASFSSYPGLFGSLDDFYILGSGLIMLQTTNSVFNLSLLKKVVPESLFAWERVRIANMMADSGKTWAETFEKQNSGTYNNQYMILDTKKIKLQRSLEDGTLYIIEQVPKLVKYSDQTKVLRNGYWPSYNIPFDKEIYNMSGYGEYVQRHGLEFSYEMAPRAKIFRRDQGKVTDMESMKFIMRYNNYKEDPYAKHNPCNTICCRQDLDRRTPVPAGCYDSKVADISMAAKFTAYAINGPPVEKGLPVFSWVHFNKTKHQGLPESYNFDFVTMKPVL.

A signal peptide spans 1–35 (MIRFGNPSSSDKRRQRCRSWYWGGLLLLWAVAETR). 3 N-linked (GlcNAc...) asparagine glycosylation sites follow: asparagine 313, asparagine 416, and asparagine 531.

It belongs to the phospholipase B-like family. As to expression, expressed by the venom gland.

The protein resides in the secreted. Its function is as follows. May cause hemolysis or may be involved in protein folding and translation. The protein is Phospholipase B of Crotalus adamanteus (Eastern diamondback rattlesnake).